The following is a 209-amino-acid chain: Ribosomal RNA large subunit methyltransferase E (209 aa).

S-adenosyl-L-methionine contacts are provided by Gly-60, Trp-62, Asp-80, Asp-96, and Asp-121. Lys-161 acts as the Proton acceptor in catalysis. The span at 182-196 (VQMRKPSSSRDRSRE) shows a compositional bias: basic and acidic residues. Residues 182–209 (VQMRKPSSSRDRSREQYLLGRGFRGRSE) form a disordered region.

The protein belongs to the class I-like SAM-binding methyltransferase superfamily. RNA methyltransferase RlmE family.

It is found in the cytoplasm. The enzyme catalyses uridine(2552) in 23S rRNA + S-adenosyl-L-methionine = 2'-O-methyluridine(2552) in 23S rRNA + S-adenosyl-L-homocysteine + H(+). Its function is as follows. Specifically methylates the uridine in position 2552 of 23S rRNA at the 2'-O position of the ribose in the fully assembled 50S ribosomal subunit. This Pseudomonas fluorescens (strain ATCC BAA-477 / NRRL B-23932 / Pf-5) protein is Ribosomal RNA large subunit methyltransferase E.